We begin with the raw amino-acid sequence, 22 residues long: Ocellatin-LB1 (22 aa).

Met-22 carries the post-translational modification Methionine amide.

As to expression, expressed by the skin glands.

The protein resides in the secreted. Antibacterial peptide that inhibits Gram-negative bacteria A.actinomycetemcomitans ATCC 29522 (MIC=222.37 uM) and E.coli ATCC 25922 (MIC=114.04 uM). Also has antifungal activity against C.albicans ATCC 18804 (MIC=233.55 uM) and C.lusitaniae ATCC 56936 (MIC=233.55 uM). No activity against the Gram-positive bacterium S.aureus ATCC 25923. Shows virtually no hemolytic activity towards rabbit erythrocytes. The protein is Ocellatin-LB1 of Leptodactylus labyrinthicus (Labyrinth frog).